The primary structure comprises 209 residues: Putative tripartite motif-containing protein 61 (209 aa).

Residues 16-57 (CPICLDYLKDPVTISCGHNFCLSCIIMSWKDLHDSFPCPFCH) form an RING-type zinc finger. Residues 92 to 133 (EEKHVCKKHNQVLTFFCQKDLELLCPRCSLSTDHQHHCVWPI) form a B box-type zinc finger. Residues C97, H100, C119, and H125 each coordinate Zn(2+).

The protein is Putative tripartite motif-containing protein 61 (TRIM61) of Homo sapiens (Human).